The primary structure comprises 316 residues: tRNA methyltransferase 10 homolog B (316 aa).

The stretch at 73-97 (EKIVAAKKSKRKQEKERRKANRAEN) forms a coiled coil. Positions 77–98 (AAKKSKRKQEKERRKANRAENP) are disordered. The region spanning 113 to 310 (TKDKLLEAKH…KGVSSGKGYI (198 aa)) is the SAM-dependent MTase TRM10-type domain.

Belongs to the class IV-like SAM-binding methyltransferase superfamily. TRM10 family.

The enzyme catalyses guanosine(9) in tRNA + S-adenosyl-L-methionine = N(1)-methylguanosine(9) in tRNA + S-adenosyl-L-homocysteine + H(+). Its function is as follows. S-adenosyl-L-methionine-dependent guanine N(1)-methyltransferase that catalyzes the formation of N(1)-methylguanine at position 9 (m1G9) in tRNAs. Probably not able to catalyze formation of N(1)-methyladenine at position 9 (m1A9) in tRNAs. This is tRNA methyltransferase 10 homolog B (TRMT10B) from Homo sapiens (Human).